Reading from the N-terminus, the 176-residue chain is Ribosome rescue factor SmrB (176 aa).

Positions 97 to 172 (LDMHGMTQQE…GDGALLVLLS (76 aa)) constitute a Smr domain.

Belongs to the SmrB family. Associates with collided ribosomes, but not with correctly translating polysomes.

Acts as a ribosome collision sensor. Detects stalled/collided disomes (pairs of ribosomes where the leading ribosome is stalled and a second ribosome has collided with it) and endonucleolytically cleaves mRNA at the 5' boundary of the stalled ribosome. Stalled/collided disomes form a new interface (primarily via the 30S subunits) that binds SmrB. Cleaved mRNA becomes available for tmRNA ligation, leading to ribosomal subunit dissociation and rescue of stalled ribosomes. This chain is Ribosome rescue factor SmrB, found in Vibrio vulnificus (strain CMCP6).